Reading from the N-terminus, the 398-residue chain is Acetate kinase (398 aa).

Residue N8 coordinates Mg(2+). K15 serves as a coordination point for ATP. Residue R89 participates in substrate binding. D146 acts as the Proton donor/acceptor in catalysis. Residues 206-210 (HIGNG), 283-285 (DMR), and 331-335 (GMGEN) each bind ATP. E383 is a binding site for Mg(2+).

The protein belongs to the acetokinase family. In terms of assembly, homodimer. Mg(2+) is required as a cofactor. The cofactor is Mn(2+).

The protein resides in the cytoplasm. The enzyme catalyses acetate + ATP = acetyl phosphate + ADP. It participates in metabolic intermediate biosynthesis; acetyl-CoA biosynthesis; acetyl-CoA from acetate: step 1/2. Functionally, catalyzes the formation of acetyl phosphate from acetate and ATP. Can also catalyze the reverse reaction. The sequence is that of Acetate kinase from Streptococcus pyogenes serotype M12 (strain MGAS2096).